The primary structure comprises 735 residues: Protein STRUBBELIG-RECEPTOR FAMILY 2 (735 aa).

The first 23 residues, 1–23 (MKTKQQLRFLATILLTTILFVLA), serve as a signal peptide directing secretion. Residues 24–297 (KTDTDPLEVL…KKKKKGIGAG (274 aa)) are Extracellular-facing. LRR repeat units follow at residues 78-94 (LRELKLLGSLGNQLQHL), 96-119 (NLKILDVSFNNLEGEIPFGLPPNA), 120-140 (THINMAYNNLTQSIPFSLPLM), 142-163 (SLQSLNLSHNSLSGPLGNVFSG), 165-187 (QIKEMDLSFNNLTGDLPSSFGTL), 189-211 (NLTSLYLQNNRLTGSVIYLADLP), 212-232 (LADLNIEDNQFSGIIPSHFQS), and 233-253 (IPHLWIWGNKFHVEPNYKPWK). N-linked (GlcNAc...) asparagine glycosylation is found at asparagine 118, asparagine 128, asparagine 147, asparagine 175, and asparagine 189. N-linked (GlcNAc...) asparagine glycosylation occurs at asparagine 264. A helical transmembrane segment spans residues 298–318 (STFLLVGGLALLGTFFALFAV). At 319-735 (RMNHRRAQNL…SSPTFSYLSS (417 aa)) the chain is on the cytoplasmic side. Residues 358–378 (PQIKRFQPPPAPQLRHLPSPP) are disordered. In terms of domain architecture, Protein kinase spans 415-695 (FSEENLLGEG…EIVEALTALI (281 aa)).

This sequence belongs to the protein kinase superfamily. Ser/Thr protein kinase family. As to expression, expressed in seedlings, roots, stems, leaves, flowers and siliques.

It is found in the membrane. The sequence is that of Protein STRUBBELIG-RECEPTOR FAMILY 2 (SRF2) from Arabidopsis thaliana (Mouse-ear cress).